A 392-amino-acid chain; its full sequence is Chloramphenicol resistance protein (392 aa).

12 helical membrane-spanning segments follow: residues 6–26 (YLLAVAVCAMGTSEFMLAGLV), 42–62 (TLTSAFATGMIVGAPLVAALA), 71–91 (LLGFILAFAAAHAVGAGTTSF), 100–120 (VAALANAGFLAVALTTAAALV), 129–149 (LAVLLSGTTVATVAGVPGGSL), 160–180 (FWAVAVCCLPAAFGVLKAIPA), 205–225 (LLLAMLLGALVNAATFASFTF), 239–259 (LWISVALVLFGAGSFAGVTVA), 268–288 (AQVLAVAGPLLLVGWPALAML), 294–314 (ALLTLVFVQGALSFALGSTLI), 332–352 (ATAALNVGAAAGPLVAATTLG), and 358–378 (LGPLWASGLLVAVALLVAFPF).

The protein belongs to the major facilitator superfamily.

Its subcellular location is the cell membrane. This Streptomyces lividans protein is Chloramphenicol resistance protein (cmlR).